We begin with the raw amino-acid sequence, 182 residues long: Transcription antitermination protein NusB (182 aa).

The tract at residues Thr159–Gln182 is disordered.

This sequence belongs to the NusB family.

Its function is as follows. Involved in transcription antitermination. Required for transcription of ribosomal RNA (rRNA) genes. Binds specifically to the boxA antiterminator sequence of the ribosomal RNA (rrn) operons. In Corynebacterium diphtheriae (strain ATCC 700971 / NCTC 13129 / Biotype gravis), this protein is Transcription antitermination protein NusB.